The sequence spans 815 residues: Phenylalanine--tRNA ligase beta subunit (815 aa).

Residues 39–148 (SKELQKFEVA…KDAVVGDNFT (110 aa)) enclose the tRNA-binding domain. The 76-residue stretch at 421-496 (PQKKPLDFSV…RIYGYDKIES (76 aa)) folds into the B5 domain. Residues D474, D480, E483, and E484 each coordinate Mg(2+). One can recognise an FDX-ACB domain in the interval 721 to 814 (SDYQANFRDY…ISQKFQGILR (94 aa)).

Belongs to the phenylalanyl-tRNA synthetase beta subunit family. Type 1 subfamily. Tetramer of two alpha and two beta subunits. Requires Mg(2+) as cofactor.

The protein resides in the cytoplasm. The catalysed reaction is tRNA(Phe) + L-phenylalanine + ATP = L-phenylalanyl-tRNA(Phe) + AMP + diphosphate + H(+). In Rickettsia prowazekii (strain Madrid E), this protein is Phenylalanine--tRNA ligase beta subunit (pheT).